Consider the following 386-residue polypeptide: S-adenosylmethionine synthase (386 aa).

His16 lines the ATP pocket. Asp18 contacts Mg(2+). Position 44 (Glu44) interacts with K(+). Residues Glu57 and Gln100 each contribute to the L-methionine site. The segment at 100–110 (QSRDITQGVDR) is flexible loop. ATP contacts are provided by residues 165 to 167 (DAK), Asp240, 246 to 247 (RK), Ala263, and Lys267. Asp240 contacts L-methionine. Lys271 contacts L-methionine.

It belongs to the AdoMet synthase family. As to quaternary structure, homotetramer; dimer of dimers. Mg(2+) is required as a cofactor. The cofactor is K(+).

The protein resides in the cytoplasm. The enzyme catalyses L-methionine + ATP + H2O = S-adenosyl-L-methionine + phosphate + diphosphate. The protein operates within amino-acid biosynthesis; S-adenosyl-L-methionine biosynthesis; S-adenosyl-L-methionine from L-methionine: step 1/1. Its function is as follows. Catalyzes the formation of S-adenosylmethionine (AdoMet) from methionine and ATP. The overall synthetic reaction is composed of two sequential steps, AdoMet formation and the subsequent tripolyphosphate hydrolysis which occurs prior to release of AdoMet from the enzyme. This chain is S-adenosylmethionine synthase, found in Francisella tularensis subsp. tularensis (strain FSC 198).